A 179-amino-acid chain; its full sequence is Avenin-like a2 (179 aa).

Residues 1–19 (MKTMFLLALLAFTATSAVA) form the signal peptide.

This sequence belongs to the prolamin family. Post-translationally, contains 7 disulfide bonds.

Functionally, seed storage protein. Not integrated in the gluten polymer through disulfide bonds, unless incorporated by reduction and reoxidation during dough making. Increases dough strength and bread volume, but decreases dough stability when added into a base wheat flour. The chain is Avenin-like a2 from Triticum aestivum (Wheat).